The sequence spans 181 residues: UPF0302 protein LMOf2365_1950 (181 aa).

The protein belongs to the UPF0302 family.

The sequence is that of UPF0302 protein LMOf2365_1950 from Listeria monocytogenes serotype 4b (strain F2365).